We begin with the raw amino-acid sequence, 435 residues long: Methionine aminopeptidase 2 (435 aa).

A disordered region spans residues 1-87; sequence MAAQVADGVA…TQTKPPRVPV (87 aa). Over residues 10 to 19 the composition is skewed to basic and acidic residues; that stretch reads ADLKLDDTKS. Residues 20 to 29 show a composition bias toward polar residues; it reads KPTNGTTQNG. Residues 32–46 show a composition bias toward acidic residues; sequence EHEDSDDDNEGEEGA. A compositionally biased stretch (basic residues) spans 55–68; it reads KKKKKRKPRKKKKA. H199 is a binding site for substrate. A divalent metal cation-binding residues include D219, D230, and H299. H307 is a binding site for substrate. A divalent metal cation contacts are provided by E332 and E427.

The protein belongs to the peptidase M24A family. Methionine aminopeptidase eukaryotic type 2 subfamily. Requires Co(2+) as cofactor. The cofactor is Zn(2+). Mn(2+) serves as cofactor. Fe(2+) is required as a cofactor.

The protein localises to the cytoplasm. The catalysed reaction is Release of N-terminal amino acids, preferentially methionine, from peptides and arylamides.. In terms of biological role, cotranslationally removes the N-terminal methionine from nascent proteins. The N-terminal methionine is often cleaved when the second residue in the primary sequence is small and uncharged (Met-Ala-, Cys, Gly, Pro, Ser, Thr, or Val). This Phaeosphaeria nodorum (strain SN15 / ATCC MYA-4574 / FGSC 10173) (Glume blotch fungus) protein is Methionine aminopeptidase 2.